A 131-amino-acid chain; its full sequence is Small ribosomal subunit protein uS8 (131 aa).

The protein belongs to the universal ribosomal protein uS8 family. Part of the 30S ribosomal subunit. Contacts proteins S5 and S12.

In terms of biological role, one of the primary rRNA binding proteins, it binds directly to 16S rRNA central domain where it helps coordinate assembly of the platform of the 30S subunit. In Campylobacter jejuni (strain RM1221), this protein is Small ribosomal subunit protein uS8.